The primary structure comprises 292 residues: Small ribosomal subunit protein uS9m (292 aa).

Positions 273–292 (VERKKPGKRKARKMPTWVKR) are disordered.

The protein belongs to the universal ribosomal protein uS9 family.

It is found in the mitochondrion. The protein is Small ribosomal subunit protein uS9m (MRPS9) of Kluyveromyces marxianus (Yeast).